The primary structure comprises 448 residues: Antizyme inhibitor 1 (448 aa).

This sequence belongs to the Orn/Lys/Arg decarboxylase class-II family. ODC antizyme inhibitor subfamily. In terms of assembly, monomer. Interacts with OAZ1 and OAZ3; this interaction disrupts the interaction between the antizyme and ODC1. Post-translationally, ubiquitinated, leading to its proteasomal degradation; a process that is reduced in presence of antizyme OAZ1. Expressed in various tissues including liver, heart and kidney.

Its subcellular location is the nucleus. In terms of biological role, antizyme inhibitor (AZI) protein that positively regulates ornithine decarboxylase (ODC) activity and polyamine uptake. AZI is an enzymatically inactive ODC homolog that counteracts the negative effect of ODC antizymes (AZs) OAZ1, OAZ2 and OAZ3 on ODC activity by competing with ODC for antizyme-binding. Inhibits antizyme-dependent ODC degradation and releases ODC monomers from their inactive complex with antizymes, leading to formation of the catalytically active ODC homodimer and restoring polyamine production. The chain is Antizyme inhibitor 1 (Azin1) from Rattus norvegicus (Rat).